We begin with the raw amino-acid sequence, 150 residues long: Large ribosomal subunit protein bL9 (150 aa).

This sequence belongs to the bacterial ribosomal protein bL9 family.

Its function is as follows. Binds to the 23S rRNA. This Cupriavidus metallidurans (strain ATCC 43123 / DSM 2839 / NBRC 102507 / CH34) (Ralstonia metallidurans) protein is Large ribosomal subunit protein bL9.